The chain runs to 325 residues: Olfactory receptor 6Y1 (325 aa).

The Extracellular portion of the chain corresponds to 1 to 30 (MTTIILEVDNHTVTTRFILLGFPTRPAFQL). N-linked (GlcNAc...) asparagine glycosylation is present at asparagine 10. The chain crosses the membrane as a helical span at residues 31 to 51 (LFFSIFLATYLLTLLENLLII). At 52 to 59 (LAIHSDGQ) the chain is on the cytoplasmic side. A helical membrane pass occupies residues 60-80 (LHKPMYFFLSHLSFLEMWYVT). Residues 81 to 104 (VISPKMLVDFLSHDKSISFNGCMT) are Extracellular-facing. An intrachain disulfide couples cysteine 102 to cysteine 194. Residues 105-125 (QLYFFVTFVCTEYILLAIMAF) traverse the membrane as a helical segment. Over 126–144 (DRYVAICNPLRYPVIMTNQ) the chain is Cytoplasmic. A helical membrane pass occupies residues 145 to 165 (LCGTLAGGCWFCGLMTAMIKM). At 166–202 (VFIAQLHYCGMPQINHYFCDISPLLNVSCEDASQAEM) the chain is on the extracellular side. Asparagine 191 is a glycosylation site (N-linked (GlcNAc...) asparagine). A helical membrane pass occupies residues 203 to 222 (VDFFLALMVIAIPLCVVVAS). Residues 223–242 (YAAILATILRIPSAQGRQKA) are Cytoplasmic-facing. A helical membrane pass occupies residues 243 to 263 (FSTCASHLTVVILFYSMTLFT). At 264-276 (YARPKLMYAYNSN) the chain is on the extracellular side. A helical membrane pass occupies residues 277–297 (KVVSVLYTVIVPLLNPIIYCL). Residues 298-325 (RNHEVKAALRKTIHCRGSGPQGNGAFSS) lie on the Cytoplasmic side of the membrane.

This sequence belongs to the G-protein coupled receptor 1 family.

The protein resides in the cell membrane. Its function is as follows. Odorant receptor. This Homo sapiens (Human) protein is Olfactory receptor 6Y1 (OR6Y1).